The sequence spans 430 residues: Adenylosuccinate synthetase (430 aa).

GTP is bound by residues 13–19 (GDEGKGK) and 41–43 (GHT). Aspartate 14 (proton acceptor) is an active-site residue. Mg(2+) contacts are provided by aspartate 14 and glycine 41. IMP-binding positions include 14–17 (DEGK), 39–42 (NAGH), threonine 130, arginine 144, glutamine 225, threonine 240, and arginine 304. Catalysis depends on histidine 42, which acts as the Proton donor. 300 to 306 (STTGRAR) is a binding site for substrate. GTP contacts are provided by residues arginine 306, 332-334 (KLD), and 414-416 (STG).

It belongs to the adenylosuccinate synthetase family. As to quaternary structure, homodimer. It depends on Mg(2+) as a cofactor.

The protein resides in the cytoplasm. The catalysed reaction is IMP + L-aspartate + GTP = N(6)-(1,2-dicarboxyethyl)-AMP + GDP + phosphate + 2 H(+). Its pathway is purine metabolism; AMP biosynthesis via de novo pathway; AMP from IMP: step 1/2. Functionally, plays an important role in the de novo pathway of purine nucleotide biosynthesis. Catalyzes the first committed step in the biosynthesis of AMP from IMP. The chain is Adenylosuccinate synthetase from Pseudomonas putida (strain W619).